The primary structure comprises 702 residues: NAD(P)H-quinone oxidoreductase subunit 5, chloroplastic (702 aa).

The next 16 membrane-spanning stretches (helical) occupy residues 7-27, 40-60, 91-111, 124-144, 147-167, 189-209, 224-244, 258-278, 289-309, 327-347, 354-374, 395-415, 427-447, 511-531, 562-582, and 680-700; these read YVWI…LGLI, SAIL…TVLW, PLSA…MIYT, FFAY…SPNL, VYAF…FWFT, LLLG…DIVA, VLLT…SAQF, TPIS…YLVA, LVMD…ATVA, LGYM…FHLI, ALLF…VGYN, GVTF…ACFW, KLPV…FYMF, IPLI…APLP, FAIT…IAWI, and IFVL…FNFF.

The protein belongs to the complex I subunit 5 family. As to quaternary structure, NDH is composed of at least 16 different subunits, 5 of which are encoded in the nucleus.

It is found in the plastid. Its subcellular location is the chloroplast thylakoid membrane. It catalyses the reaction a plastoquinone + NADH + (n+1) H(+)(in) = a plastoquinol + NAD(+) + n H(+)(out). The enzyme catalyses a plastoquinone + NADPH + (n+1) H(+)(in) = a plastoquinol + NADP(+) + n H(+)(out). In terms of biological role, NDH shuttles electrons from NAD(P)H:plastoquinone, via FMN and iron-sulfur (Fe-S) centers, to quinones in the photosynthetic chain and possibly in a chloroplast respiratory chain. The immediate electron acceptor for the enzyme in this species is believed to be plastoquinone. Couples the redox reaction to proton translocation, and thus conserves the redox energy in a proton gradient. The sequence is that of NAD(P)H-quinone oxidoreductase subunit 5, chloroplastic (ndhF) from Zygnema circumcarinatum (Green alga).